The chain runs to 105 residues: Large ribosomal subunit protein uL24 (105 aa).

Belongs to the universal ribosomal protein uL24 family. In terms of assembly, part of the 50S ribosomal subunit.

One of two assembly initiator proteins, it binds directly to the 5'-end of the 23S rRNA, where it nucleates assembly of the 50S subunit. In terms of biological role, one of the proteins that surrounds the polypeptide exit tunnel on the outside of the subunit. This is Large ribosomal subunit protein uL24 from Thioalkalivibrio sulfidiphilus (strain HL-EbGR7).